The sequence spans 240 residues: Ribonuclease 3 (240 aa).

Positions valine 9–glycine 141 constitute an RNase III domain. Glutamate 54 contacts Mg(2+). Aspartate 58 is an active-site residue. 2 residues coordinate Mg(2+): aspartate 127 and glutamate 130. Residue glutamate 130 is part of the active site. A DRBM domain is found at aspartate 168–lysine 237.

This sequence belongs to the ribonuclease III family. As to quaternary structure, homodimer. The cofactor is Mg(2+).

The protein localises to the cytoplasm. It carries out the reaction Endonucleolytic cleavage to 5'-phosphomonoester.. Functionally, digests double-stranded RNA. Involved in the processing of primary rRNA transcript to yield the immediate precursors to the large and small rRNAs (23S and 16S). Also processes some mRNAs, and tRNAs when they are encoded in the rRNA operon. Probably processes pre-crRNA and tracrRNA of type II CRISPR loci if present in the organism. This Thermotoga maritima (strain ATCC 43589 / DSM 3109 / JCM 10099 / NBRC 100826 / MSB8) protein is Ribonuclease 3 (rnc).